A 56-amino-acid polypeptide reads, in one-letter code: Ribosome modulation factor (56 aa).

The protein belongs to the ribosome modulation factor family.

It localises to the cytoplasm. In terms of biological role, during stationary phase, converts 70S ribosomes to an inactive dimeric form (100S ribosomes). The protein is Ribosome modulation factor of Serratia proteamaculans (strain 568).